We begin with the raw amino-acid sequence, 247 residues long: DNA repair protein RecO (247 aa).

This sequence belongs to the RecO family.

In terms of biological role, involved in DNA repair and RecF pathway recombination. The polypeptide is DNA repair protein RecO (Alkalilimnicola ehrlichii (strain ATCC BAA-1101 / DSM 17681 / MLHE-1)).